Consider the following 174-residue polypeptide: Co-chaperone protein HscB homolog (174 aa).

In terms of domain architecture, J spans 2–74 (NYFELFKFSP…IRRAEHMLSL (73 aa)).

Belongs to the HscB family. As to quaternary structure, interacts with HscA and stimulates its ATPase activity.

Functionally, co-chaperone involved in the maturation of iron-sulfur cluster-containing proteins. Seems to help targeting proteins to be folded toward HscA. In Shewanella sp. (strain MR-4), this protein is Co-chaperone protein HscB homolog.